The following is a 488-amino-acid chain: Integrin beta-like protein 1 (488 aa).

The N-terminal stretch at 1–21 is a signal peptide; the sequence is MHAGAFINFVWALSLVSLLAA. Cystine bridges form between Cys38/Cys65, Cys49/Cys63, Cys57/Cys68, Cys70/Cys83, Cys85/Cys106, Cys90/Cys104, Cys98/Cys109, Cys111/Cys120, Cys126/Cys153, Cys137/Cys151, Cys145/Cys156, Cys158/Cys172, Cys174/Cys196, Cys179/Cys194, Cys188/Cys199, Cys201/Cys210, Cys214/Cys241, Cys225/Cys239, Cys233/Cys244, Cys246/Cys263, Cys265/Cys290, Cys270/Cys288, Cys282/Cys293, Cys295/Cys304, Cys310/Cys337, Cys321/Cys335, Cys329/Cys340, Cys342/Cys355, Cys357/Cys378, Cys362/Cys376, Cys370/Cys381, Cys383/Cys392, Cys398/Cys425, Cys409/Cys423, Cys417/Cys428, Cys430/Cys442, Cys444/Cys465, Cys449/Cys463, Cys457/Cys468, and Cys470/Cys479. I-EGF domains lie at 38 to 84, 85 to 121, 126 to 173, 174 to 211, 214 to 264, 265 to 305, 310 to 356, 357 to 393, 398 to 443, and 444 to 480; these read CRLP…PLCE, CHDW…EACQ, CDLT…KYCE, CDDT…DKCE, CDIT…DTCE, CDER…RKCE, CALS…KNCE, CDDR…KLCQ, CNMT…EFCE, and CDDR…NACE. The I repeat unit spans residues 49 to 89; sequence CRTPDGSICSGRGSCDCGICLCEVKEAGKYYGPLCECHDWV. Residues 49-488 are cysteine-rich tandem repeats; it reads CRTPDGSICS…CEIWLGSEYP (440 aa). The II repeat unit spans residues 90–136; it reads CHTYDGQVCAGHGQCDCGVCKCDVGWSGEACQYPTTCDLTRKKSNEM. The III repeat unit spans residues 137-178; it reads CKNSQAVICSNAGTCQCGRCKCENSDNSGLIYGKYCECDDTE. The IV repeat unit spans residues 179-224; it reads CFDDETQEICGGHGKCYCGNCYCEAGWHGDKCEFQCDITPWEIKKR. The stretch at 225–269 is one V repeat; the sequence is CTSPDGKICSNRGTCVCGECTCHDVDPTGDWGDIHGDTCECDERN. The stretch at 270-320 is one VI repeat; that stretch reads CKSVYDRYSDDFCSGHGQCNCGRCDCKDGWTGRKCEHPRACALSIEESKKK. A VII repeat occupies 321-361; the sequence is CQGSASQPCSGRGKCECGQCTCFPPGDSKVYGKNCECDDRQ. Residues 362–408 form a VIII repeat; the sequence is CEDLEGKICGEHGTCSCGRCICEAGWFGKLCQHERKCNMTEEESKSQ. Asn399 carries N-linked (GlcNAc...) asparagine glycosylation. An IX repeat occupies 409–448; it reads CESDDGILCSGKGSCHCGKCICSPQEWYVSGEFCECDDRD. One copy of the X repeat lies at 449–488; it reads CDKHDGLICTGNGICNCGNCECWEGWNGNACEIWLGSEYP.

The protein localises to the secreted. The sequence is that of Integrin beta-like protein 1 (itgbl1) from Xenopus laevis (African clawed frog).